The chain runs to 289 residues: Probable ABC transporter permease protein BRA0749/BS1330_II0742 (289 aa).

6 helical membrane-spanning segments follow: residues 9–29 (FLIL…VVHL), 70–90 (VWTV…AIIL), 99–119 (VARV…AIVW), 144–166 (IQWL…LVTV), 213–233 (IAIV…WVMT), and 260–280 (EASA…VIYI). In terms of domain architecture, ABC transmembrane type-1 spans 65–279 (LWRTAVWTVA…AILLVFTVIY (215 aa)).

It belongs to the binding-protein-dependent transport system permease family. The complex is composed of two ATP-binding proteins (BRA0745), two transmembrane proteins (BRA0749) and a solute-binding protein (BRA0748).

It localises to the cell inner membrane. Functionally, probably part of an ABC transporter complex. Probably responsible for the translocation of the substrate across the membrane. This chain is Probable ABC transporter permease protein BRA0749/BS1330_II0742, found in Brucella suis biovar 1 (strain 1330).